Reading from the N-terminus, the 523-residue chain is 2-isopropylmalate synthase (523 aa).

One can recognise a Pyruvate carboxyltransferase domain in the interval 5–267 (VIIFDTTLRD…HTAINHQEIW (263 aa)). Mn(2+) contacts are provided by aspartate 14, histidine 202, histidine 204, and asparagine 238. The segment at 392 to 523 (RLDYFSVQSG…QHNENNKETV (132 aa)) is regulatory domain.

Belongs to the alpha-IPM synthase/homocitrate synthase family. LeuA type 1 subfamily. As to quaternary structure, homodimer. The cofactor is Mn(2+).

It is found in the cytoplasm. It catalyses the reaction 3-methyl-2-oxobutanoate + acetyl-CoA + H2O = (2S)-2-isopropylmalate + CoA + H(+). It functions in the pathway amino-acid biosynthesis; L-leucine biosynthesis; L-leucine from 3-methyl-2-oxobutanoate: step 1/4. Functionally, catalyzes the condensation of the acetyl group of acetyl-CoA with 3-methyl-2-oxobutanoate (2-ketoisovalerate) to form 3-carboxy-3-hydroxy-4-methylpentanoate (2-isopropylmalate). The chain is 2-isopropylmalate synthase from Escherichia coli O157:H7.